Reading from the N-terminus, the 382-residue chain is Na(+)/H(+) antiporter NhaA 2 (382 aa).

The next 12 membrane-spanning stretches (helical) occupy residues 7–27, 28–48, 52–72, 88–108, 118–138, 147–167, 170–190, 206–226, 254–274, 285–305, 325–345, and 356–376; these read AGGVLLIAASILALIFANSYL, SGFYNGVLNLPLVVAIGAFEI, LLLWVNDGLMALFFLMVGLEV, VLPGLAALAGVAFPAIIYASF, GWAIPSATDIAFALGVFSLFG, LFLLSVAIFDDIAAIVIIALF, HELSTLSLLVAGIGIVMLFVL, LVVWAAVLKSGVHATLAGFVI, VAYFILPFFAFVNAGVHLGGI, LGIIVGLFVGKQLGIFSVCWL, GVCLLAGIGFTMSLFIGSLAF, and VKLGVLFGSLLSAICGALILT.

The protein belongs to the NhaA Na(+)/H(+) (TC 2.A.33) antiporter family.

It is found in the cell inner membrane. It carries out the reaction Na(+)(in) + 2 H(+)(out) = Na(+)(out) + 2 H(+)(in). Its function is as follows. Na(+)/H(+) antiporter that extrudes sodium in exchange for external protons. This Saccharophagus degradans (strain 2-40 / ATCC 43961 / DSM 17024) protein is Na(+)/H(+) antiporter NhaA 2.